A 211-amino-acid chain; its full sequence is Redox-sensing transcriptional repressor Rex (211 aa).

Residues 17–56 constitute a DNA-binding region (H-T-H motif); that stretch reads LYYRFIQNFAQEGMERISSKELSEAMKIDSATIRRDFSYF. 91 to 96 provides a ligand contact to NAD(+); that stretch reads GVGNLG.

Belongs to the transcriptional regulatory Rex family. Homodimer.

Its subcellular location is the cytoplasm. Functionally, modulates transcription in response to changes in cellular NADH/NAD(+) redox state. The polypeptide is Redox-sensing transcriptional repressor Rex (Lysinibacillus sphaericus (strain C3-41)).